A 360-amino-acid polypeptide reads, in one-letter code: Phosphoserine aminotransferase (360 aa).

Arg42 serves as a coordination point for L-glutamate. Residues Trp102, Thr152, Asp171, and Gln194 each coordinate pyridoxal 5'-phosphate. N6-(pyridoxal phosphate)lysine is present on Lys195. 237 to 238 (NT) is a pyridoxal 5'-phosphate binding site.

It belongs to the class-V pyridoxal-phosphate-dependent aminotransferase family. SerC subfamily. In terms of assembly, homodimer. It depends on pyridoxal 5'-phosphate as a cofactor.

It is found in the cytoplasm. It catalyses the reaction O-phospho-L-serine + 2-oxoglutarate = 3-phosphooxypyruvate + L-glutamate. It carries out the reaction 4-(phosphooxy)-L-threonine + 2-oxoglutarate = (R)-3-hydroxy-2-oxo-4-phosphooxybutanoate + L-glutamate. The protein operates within amino-acid biosynthesis; L-serine biosynthesis; L-serine from 3-phospho-D-glycerate: step 2/3. Its pathway is cofactor biosynthesis; pyridoxine 5'-phosphate biosynthesis; pyridoxine 5'-phosphate from D-erythrose 4-phosphate: step 3/5. In terms of biological role, catalyzes the reversible conversion of 3-phosphohydroxypyruvate to phosphoserine and of 3-hydroxy-2-oxo-4-phosphonooxybutanoate to phosphohydroxythreonine. This is Phosphoserine aminotransferase from Coxiella burnetii (strain CbuG_Q212) (Coxiella burnetii (strain Q212)).